Here is a 347-residue protein sequence, read N- to C-terminus: Dihydroorotase (347 aa).

Zn(2+) is bound by residues His13 and His15. Residues 15-17 (HLR) and Asn41 each bind substrate. Positions 99, 136, and 174 each coordinate Zn(2+). Lys99 carries the N6-carboxylysine modification. His136 lines the substrate pocket. A substrate-binding site is contributed by Leu219. Asp247 lines the Zn(2+) pocket. Asp247 is an active-site residue. His251 and Ala263 together coordinate substrate.

This sequence belongs to the metallo-dependent hydrolases superfamily. DHOase family. Class II DHOase subfamily. In terms of assembly, homodimer. The cofactor is Zn(2+).

It carries out the reaction (S)-dihydroorotate + H2O = N-carbamoyl-L-aspartate + H(+). Its pathway is pyrimidine metabolism; UMP biosynthesis via de novo pathway; (S)-dihydroorotate from bicarbonate: step 3/3. Functionally, catalyzes the reversible cyclization of carbamoyl aspartate to dihydroorotate. The chain is Dihydroorotase from Sinorhizobium medicae (strain WSM419) (Ensifer medicae).